The chain runs to 155 residues: Large ribosomal subunit protein uL15 (155 aa).

Residues 1-63 form a disordered region; the sequence is MKLHELAPNP…QMPLTRRLPK (63 aa). Gly residues-rich tracts occupy residues 21–31 and 42–52; these read RGIGSGLGKTS and SGGGVRPGFEG.

The protein belongs to the universal ribosomal protein uL15 family. In terms of assembly, part of the 50S ribosomal subunit.

In terms of biological role, binds to the 23S rRNA. The protein is Large ribosomal subunit protein uL15 of Symbiobacterium thermophilum (strain DSM 24528 / JCM 14929 / IAM 14863 / T).